The following is a 636-amino-acid chain: Chaperone protein DnaK (636 aa).

At Thr-198 the chain carries Phosphothreonine; by autocatalysis. Positions 602-636 (QAEGAQPGGEAAGEASAKDEKVVDADFEEVKDDKK) are disordered. Residues 626 to 636 (ADFEEVKDDKK) are compositionally biased toward acidic residues.

Belongs to the heat shock protein 70 family.

In terms of biological role, acts as a chaperone. This Geobacter sulfurreducens (strain ATCC 51573 / DSM 12127 / PCA) protein is Chaperone protein DnaK.